The sequence spans 260 residues: Arginine esterase (260 aa).

The N-terminal stretch at 1-17 is a signal peptide; that stretch reads MWFLALCLAMSLGWTGA. The propeptide at 18–24 is activation peptide; it reads EPHFQPR. One can recognise a Peptidase S1 domain in the interval 25 to 257; that stretch reads IIGGRECLKN…HLMWIKDTMK (233 aa). 5 disulfide bridges follow: C31–C172, C50–C66, C151–C218, C183–C197, and C208–C233. The active-site Charge relay system is the H65. A glycan (N-linked (GlcNAc...) asparagine) is linked at N79. Residue D119 is the Charge relay system of the active site. Residue S212 is the Charge relay system of the active site.

This sequence belongs to the peptidase S1 family. Kallikrein subfamily.

It carries out the reaction Preferential cleavage of Arg-|-Xaa bonds in small molecule substrates. Highly selective action to release kallidin (lysyl-bradykinin) from kininogen involves hydrolysis of Met-|-Xaa or Leu-|-Xaa.. In terms of biological role, this serine protease is found in dog seminal plasma, its exact physiological function is not known. In Canis lupus familiaris (Dog), this protein is Arginine esterase.